We begin with the raw amino-acid sequence, 93 residues long: C-C motif chemokine 3 (93 aa).

Residues 1 to 24 (MKVAVAALAVLLCAMALCSQVFSA) form the signal peptide. 2 cysteine pairs are disulfide-bonded: Cys-34–Cys-58 and Cys-35–Cys-74.

This sequence belongs to the intercrine beta (chemokine CC) family. Self-associates. Also heterodimer of MIP-1-alpha(4-69) and MIP-1-beta(3-69). Interacts with CCR1.

It localises to the secreted. In terms of biological role, monokine with inflammatory and chemokinetic properties. Binds to CCR1, CCR4 and CCR5. One of the major HIV-suppressive factors produced by CD8+ T-cells. Recombinant MIP-1-alpha induces a dose-dependent inhibition of different strains of HIV-1, HIV-2, and simian immunodeficiency virus (SIV). This Bos taurus (Bovine) protein is C-C motif chemokine 3 (CCL3).